A 293-amino-acid chain; its full sequence is Formamidopyrimidine-DNA glycosylase (293 aa).

Proline 2 functions as the Schiff-base intermediate with DNA in the catalytic mechanism. Catalysis depends on glutamate 3, which acts as the Proton donor. Catalysis depends on lysine 58, which acts as the Proton donor; for beta-elimination activity. Residues histidine 104, arginine 123, and lysine 166 each contribute to the DNA site. An FPG-type zinc finger spans residues 257 to 293; the sequence is QVYDREGEPCRTDGCGGVVKRFVQNGRSTFWCPKCQR. The Proton donor; for delta-elimination activity role is filled by arginine 283.

The protein belongs to the FPG family. In terms of assembly, monomer. Zn(2+) serves as cofactor.

It carries out the reaction Hydrolysis of DNA containing ring-opened 7-methylguanine residues, releasing 2,6-diamino-4-hydroxy-5-(N-methyl)formamidopyrimidine.. It catalyses the reaction 2'-deoxyribonucleotide-(2'-deoxyribose 5'-phosphate)-2'-deoxyribonucleotide-DNA = a 3'-end 2'-deoxyribonucleotide-(2,3-dehydro-2,3-deoxyribose 5'-phosphate)-DNA + a 5'-end 5'-phospho-2'-deoxyribonucleoside-DNA + H(+). Functionally, involved in base excision repair of DNA damaged by oxidation or by mutagenic agents. Acts as a DNA glycosylase that recognizes and removes damaged bases. Has a preference for oxidized purines, such as 7,8-dihydro-8-oxoguanine (8-oxoG). Has AP (apurinic/apyrimidinic) lyase activity and introduces nicks in the DNA strand. Cleaves the DNA backbone by beta-delta elimination to generate a single-strand break at the site of the removed base with both 3'- and 5'-phosphates. The sequence is that of Formamidopyrimidine-DNA glycosylase from Bradyrhizobium sp. (strain BTAi1 / ATCC BAA-1182).